The chain runs to 510 residues: Maturase K (510 aa).

The protein belongs to the intron maturase 2 family. MatK subfamily.

Its subcellular location is the plastid. It localises to the chloroplast. Usually encoded in the trnK tRNA gene intron. Probably assists in splicing its own and other chloroplast group II introns. The chain is Maturase K from Thuja plicata (Western red-cedar).